Consider the following 961-residue polypeptide: DNA replication licensing factor MCM2 (961 aa).

The segment covering 1-17 (MDDSENNAPSTPGSPGF) has biased composition (polar residues). Disordered stretches follow at residues 1-81 (MDDS…FNDN) and 120-220 (AEAE…EEDE). Residues 39 to 78 (SDDDDDDVVGAEEAEVDPNVLPEDDGVVAAEEEEDGEDLF) are compositionally biased toward acidic residues. Composition is skewed to basic and acidic residues over residues 120 to 146 (AEAE…LHDQ) and 166 to 176 (PPREPRTPRSD). Over residues 205 to 220 (QTDDDPYEDEFDEEDE) the composition is skewed to acidic residues. The C4-type zinc-finger motif lies at 380 to 406 (CSKCGTVLGPFFQNSYTEVKVGSCPEC). Residues 524–730 (IGERIVKSIA…FTDEMLARFV (207 aa)) enclose the MCM domain. ATP is bound at residue 574-581 (GDPGTAKS). The short motif at 706–709 (SRFD) is the Arginine finger element.

This sequence belongs to the MCM family. In terms of assembly, component of the minichromosome maintenance (MCM) complex, a heterotetramer composed of MCM2, MCM3, MCM4, MCM5, MCM6 and MCM7. Interacts with CSN5. Widely expressed, with higher expression in developing tissues.

It is found in the nucleus. It carries out the reaction ATP + H2O = ADP + phosphate + H(+). In terms of biological role, probable component of the MCM2-7 complex (MCM complex) that may function as a DNA helicase and which is essential to undergo a single round of replication initiation and elongation per cell cycle in eukaryotic cells. Can complement the fission yeast mcm2 mutant. This chain is DNA replication licensing factor MCM2, found in Oryza sativa subsp. japonica (Rice).